Consider the following 367-residue polypeptide: Phthiodiolone/phenolphthiodiolone dimycocerosates ketoreductase (367 aa).

This sequence belongs to the mer family. Phthiodiolone/phenolphthiodiolone dimycocerosates ketoreductase subfamily.

Catalyzes the reduction of the keto moiety of phthiodiolone dimycocerosates (DIM B) and glycosylated phenolphthiodiolone dimycocerosates to form the intermediate compounds phthiotriol and glycosylated phenolphthiotriol dimycocerosates during phthiocerol dimycocerosates (DIM A) and glycosylated phenolphthiocerol dimycocerosates (PGL) biosynthesis. The sequence is that of Phthiodiolone/phenolphthiodiolone dimycocerosates ketoreductase from Mycobacterium kansasii.